A 263-amino-acid chain; its full sequence is 5'-nucleotidase SurE (263 aa).

A divalent metal cation-binding residues include D11, D12, S42, and N96.

This sequence belongs to the SurE nucleotidase family. It depends on a divalent metal cation as a cofactor.

It is found in the cytoplasm. It carries out the reaction a ribonucleoside 5'-phosphate + H2O = a ribonucleoside + phosphate. In terms of biological role, nucleotidase that shows phosphatase activity on nucleoside 5'-monophosphates. The protein is 5'-nucleotidase SurE of Methanocorpusculum labreanum (strain ATCC 43576 / DSM 4855 / Z).